The chain runs to 392 residues: Dual-specificity RNA methyltransferase RlmN (392 aa).

E115 (proton acceptor) is an active-site residue. The 238-residue stretch at 121–358 folds into the Radical SAM core domain; the sequence is EVDRGTLCIS…YKAGYASPIR (238 aa). Cysteines 128 and 369 form a disulfide. The [4Fe-4S] cluster site is built by C135, C139, and C142. S-adenosyl-L-methionine contacts are provided by residues 195–196, S227, 249–251, and N326; these read GE and SFH. The S-methylcysteine intermediate role is filled by C369.

It belongs to the radical SAM superfamily. RlmN family. The cofactor is [4Fe-4S] cluster.

The protein localises to the cytoplasm. It catalyses the reaction adenosine(2503) in 23S rRNA + 2 reduced [2Fe-2S]-[ferredoxin] + 2 S-adenosyl-L-methionine = 2-methyladenosine(2503) in 23S rRNA + 5'-deoxyadenosine + L-methionine + 2 oxidized [2Fe-2S]-[ferredoxin] + S-adenosyl-L-homocysteine. It carries out the reaction adenosine(37) in tRNA + 2 reduced [2Fe-2S]-[ferredoxin] + 2 S-adenosyl-L-methionine = 2-methyladenosine(37) in tRNA + 5'-deoxyadenosine + L-methionine + 2 oxidized [2Fe-2S]-[ferredoxin] + S-adenosyl-L-homocysteine. Specifically methylates position 2 of adenine 2503 in 23S rRNA and position 2 of adenine 37 in tRNAs. m2A2503 modification seems to play a crucial role in the proofreading step occurring at the peptidyl transferase center and thus would serve to optimize ribosomal fidelity. This is Dual-specificity RNA methyltransferase RlmN from Jannaschia sp. (strain CCS1).